Consider the following 244-residue polypeptide: Isoprenyl transferase (244 aa).

The active site involves Asp23. Asp23 contributes to the Mg(2+) binding site. Residues 24–27, Trp28, Arg36, His40, and 68–70 each bind substrate; these read GNGR and STE. Residue Asn71 is the Proton acceptor of the active site. Residues Trp72, Arg74, Arg191, and 197 to 199 each bind substrate; that span reads RMS. Glu210 provides a ligand contact to Mg(2+).

The protein belongs to the UPP synthase family. In terms of assembly, homodimer. The cofactor is Mg(2+).

Its function is as follows. Catalyzes the condensation of isopentenyl diphosphate (IPP) with allylic pyrophosphates generating different type of terpenoids. In Lactococcus lactis subsp. lactis (strain IL1403) (Streptococcus lactis), this protein is Isoprenyl transferase.